The primary structure comprises 231 residues: tRNA (guanine-N(7)-)-methyltransferase (231 aa).

Positions 57, 82, 109, and 132 each coordinate S-adenosyl-L-methionine. The active site involves D132. Substrate contacts are provided by residues K136, D168, and 205–208 (TKFE). The interval 194–214 (AFVPPPPPRPQTKFERRGLRK) is disordered.

It belongs to the class I-like SAM-binding methyltransferase superfamily. TrmB family.

The enzyme catalyses guanosine(46) in tRNA + S-adenosyl-L-methionine = N(7)-methylguanosine(46) in tRNA + S-adenosyl-L-homocysteine. The protein operates within tRNA modification; N(7)-methylguanine-tRNA biosynthesis. Its function is as follows. Catalyzes the formation of N(7)-methylguanine at position 46 (m7G46) in tRNA. This Halorhodospira halophila (strain DSM 244 / SL1) (Ectothiorhodospira halophila (strain DSM 244 / SL1)) protein is tRNA (guanine-N(7)-)-methyltransferase.